We begin with the raw amino-acid sequence, 139 residues long: Trafficking protein particle complex subunit 2-like protein (139 aa).

The protein belongs to the TRAPP small subunits family. Sedlin subfamily. Component of the multisubunit TRAPP (transport protein particle) complex, which includes at least TRAPPC2, TRAPPC2L, TRAPPC3, TRAPPC3L, TRAPPC4, TRAPPC5, TRAPPC8, TRAPPC9, TRAPPC10, TRAPPC11 and TRAPPC12. Interacts with the heterodimer TRAPPC3-TRAPPC6A.

The protein localises to the cytoplasm. Its subcellular location is the perinuclear region. It localises to the endoplasmic reticulum. It is found in the golgi apparatus. Its function is as follows. May play a role in vesicular transport from endoplasmic reticulum to Golgi. The polypeptide is Trafficking protein particle complex subunit 2-like protein (TRAPPC2L) (Bos taurus (Bovine)).